A 200-amino-acid chain; its full sequence is MKFLELNKKRHAIKTFNDQPVDYEDLRTAIEIATLAPSANNIQPWKFVVVQEKKAELAKGLPLANKVQVEQAQYVVALFSDTDLALRSRKIARIGVKSLPDDLIGYYMETLPPRFAAFNEVQTGEYLAINAGIVAMNLVLSLTDQKIASNIILGFDKSTTNGILDIDPRFRPELLITVGYSDEKPEPSYRLPVDEVIERR.

Requires FMN as cofactor.

The polypeptide is Putative NAD(P)H nitroreductase Spy0809 (Streptococcus pyogenes serotype M6 (strain ATCC BAA-946 / MGAS10394)).